The primary structure comprises 239 residues: Putative 3-methyladenine DNA glycosylase (239 aa).

The protein belongs to the DNA glycosylase MPG family.

The chain is Putative 3-methyladenine DNA glycosylase from Pseudomonas aeruginosa (strain LESB58).